The sequence spans 270 residues: 4-hydroxy-tetrahydrodipicolinate reductase (270 aa).

Residues 8–13, D34, 102–104, and 128–131 contribute to the NAD(+) site; these read GALGRM, GTT, and SQNY. The active-site Proton donor/acceptor is the H160. H161 serves as a coordination point for (S)-2,3,4,5-tetrahydrodipicolinate. The Proton donor role is filled by K164. 170–171 is a binding site for (S)-2,3,4,5-tetrahydrodipicolinate; the sequence is GT.

This sequence belongs to the DapB family.

The protein localises to the cytoplasm. It carries out the reaction (S)-2,3,4,5-tetrahydrodipicolinate + NAD(+) + H2O = (2S,4S)-4-hydroxy-2,3,4,5-tetrahydrodipicolinate + NADH + H(+). The catalysed reaction is (S)-2,3,4,5-tetrahydrodipicolinate + NADP(+) + H2O = (2S,4S)-4-hydroxy-2,3,4,5-tetrahydrodipicolinate + NADPH + H(+). It functions in the pathway amino-acid biosynthesis; L-lysine biosynthesis via DAP pathway; (S)-tetrahydrodipicolinate from L-aspartate: step 4/4. In terms of biological role, catalyzes the conversion of 4-hydroxy-tetrahydrodipicolinate (HTPA) to tetrahydrodipicolinate. The sequence is that of 4-hydroxy-tetrahydrodipicolinate reductase from Methanococcus vannielii (strain ATCC 35089 / DSM 1224 / JCM 13029 / OCM 148 / SB).